We begin with the raw amino-acid sequence, 112 residues long: UPF0342 protein SSU05_1260 (112 aa).

It belongs to the UPF0342 family.

The chain is UPF0342 protein SSU05_1260 from Streptococcus suis (strain 05ZYH33).